Consider the following 282-residue polypeptide: MSSYANHQVLAGLTLGKSTDYRDTYDASLLQGVPRSLNRDPLGLKADNLPFHGTDIWTLYELSWLNAKGLPQVAVGHVELDYTSANLIESKSFKLYLNSFNQTRFNNWDEVRQTLERDLSTCAQGKVSVALYRLDELEGQPIGHFNGTCIDDQDITIDNYEFTTDYLENATSGEKVVEETLVSHLLKSNCLITHQPDWGSIQIQYRGRQIDREKLLRYLVSFRHHNEFHEQCVERIFNDLLRFCQPEKLSVYARYTRRGGLDINPWRSNSDFVPSTTRLVRQ.

88–90 (IES) lines the substrate pocket. 90–91 (SK) lines the NADPH pocket. Cys190 (thioimide intermediate) is an active-site residue. Asp197 serves as the catalytic Proton donor. 229 to 230 (HE) serves as a coordination point for substrate. 258–259 (RG) contacts NADPH.

The protein belongs to the GTP cyclohydrolase I family. QueF type 2 subfamily. As to quaternary structure, homodimer.

It localises to the cytoplasm. It catalyses the reaction 7-aminomethyl-7-carbaguanine + 2 NADP(+) = 7-cyano-7-deazaguanine + 2 NADPH + 3 H(+). It participates in tRNA modification; tRNA-queuosine biosynthesis. Its function is as follows. Catalyzes the NADPH-dependent reduction of 7-cyano-7-deazaguanine (preQ0) to 7-aminomethyl-7-deazaguanine (preQ1). The polypeptide is NADPH-dependent 7-cyano-7-deazaguanine reductase (Escherichia coli O17:K52:H18 (strain UMN026 / ExPEC)).